The chain runs to 122 residues: Large ribosomal subunit protein bL12 (122 aa).

This sequence belongs to the bacterial ribosomal protein bL12 family. As to quaternary structure, homodimer. Part of the ribosomal stalk of the 50S ribosomal subunit. Forms a multimeric L10(L12)X complex, where L10 forms an elongated spine to which 2 to 4 L12 dimers bind in a sequential fashion. Binds GTP-bound translation factors.

Functionally, forms part of the ribosomal stalk which helps the ribosome interact with GTP-bound translation factors. Is thus essential for accurate translation. The sequence is that of Large ribosomal subunit protein bL12 from Borrelia hermsii (strain HS1 / DAH).